The primary structure comprises 473 residues: Aspartyl/glutamyl-tRNA(Asn/Gln) amidotransferase subunit B (473 aa).

This sequence belongs to the GatB/GatE family. GatB subfamily. As to quaternary structure, heterotrimer of A, B and C subunits.

The catalysed reaction is L-glutamyl-tRNA(Gln) + L-glutamine + ATP + H2O = L-glutaminyl-tRNA(Gln) + L-glutamate + ADP + phosphate + H(+). It catalyses the reaction L-aspartyl-tRNA(Asn) + L-glutamine + ATP + H2O = L-asparaginyl-tRNA(Asn) + L-glutamate + ADP + phosphate + 2 H(+). In terms of biological role, allows the formation of correctly charged Asn-tRNA(Asn) or Gln-tRNA(Gln) through the transamidation of misacylated Asp-tRNA(Asn) or Glu-tRNA(Gln) in organisms which lack either or both of asparaginyl-tRNA or glutaminyl-tRNA synthetases. The reaction takes place in the presence of glutamine and ATP through an activated phospho-Asp-tRNA(Asn) or phospho-Glu-tRNA(Gln). This Francisella tularensis subsp. novicida (strain U112) protein is Aspartyl/glutamyl-tRNA(Asn/Gln) amidotransferase subunit B.